The following is a 189-amino-acid chain: Probable nicotinate-nucleotide adenylyltransferase (189 aa).

It belongs to the NadD family.

The catalysed reaction is nicotinate beta-D-ribonucleotide + ATP + H(+) = deamido-NAD(+) + diphosphate. Its pathway is cofactor biosynthesis; NAD(+) biosynthesis; deamido-NAD(+) from nicotinate D-ribonucleotide: step 1/1. Functionally, catalyzes the reversible adenylation of nicotinate mononucleotide (NaMN) to nicotinic acid adenine dinucleotide (NaAD). The sequence is that of Probable nicotinate-nucleotide adenylyltransferase from Bacillus licheniformis (strain ATCC 14580 / DSM 13 / JCM 2505 / CCUG 7422 / NBRC 12200 / NCIMB 9375 / NCTC 10341 / NRRL NRS-1264 / Gibson 46).